A 47-amino-acid polypeptide reads, in one-letter code: Defensin-like protein 2 (47 aa).

Disulfide bonds link cysteine 5-cysteine 47, cysteine 16-cysteine 36, cysteine 22-cysteine 43, and cysteine 26-cysteine 45.

The protein belongs to the DEFL family.

Its function is as follows. Fabatins have antibacterial activity against Gram-positive and Gram-negative bacteria. High activity against P.aeruginosa. No activity against S.cerevisiae and C.albicans. The chain is Defensin-like protein 2 from Vicia faba (Broad bean).